A 451-amino-acid chain; its full sequence is Aminodeoxychorismate synthase component 1 (451 aa).

Residues Ser34, 41–44 (HNRF), and 238–240 (PFS) each bind L-tryptophan. Residue Glu256 is the Proton donor of the active site. The active-site N6-(4-deoxychorismate)-lysine intermediate is the Lys272.

Belongs to the anthranilate synthase component I family. As to quaternary structure, monomer. Heterodimer consisting of two non-identical subunits: a glutamine amidotransferase subunit (PabA) and a aminodeoxychorismate synthase subunit (PabB). It depends on Mg(2+) as a cofactor.

The enzyme catalyses chorismate + L-glutamine = 4-amino-4-deoxychorismate + L-glutamate. Its pathway is cofactor biosynthesis; tetrahydrofolate biosynthesis; 4-aminobenzoate from chorismate: step 1/2. Its function is as follows. Part of a heterodimeric complex that catalyzes the two-step biosynthesis of 4-amino-4-deoxychorismate (ADC), a precursor of p-aminobenzoate (PABA) and tetrahydrofolate. In the first step, a glutamine amidotransferase (PabA) generates ammonia as a substrate that, along with chorismate, is used in the second step, catalyzed by aminodeoxychorismate synthase (PabB) to produce ADC. The polypeptide is Aminodeoxychorismate synthase component 1 (pabB) (Klebsiella aerogenes (Enterobacter aerogenes)).